A 163-amino-acid chain; its full sequence is Large ribosomal subunit protein uL13m (163 aa).

S2 is subject to N-acetylserine. Residues 2–4 (SQK) constitute a propeptide that is removed on maturation.

This sequence belongs to the universal ribosomal protein uL13 family. As to quaternary structure, component of the mitochondrial large ribosomal subunit (mt-LSU). Mature yeast 74S mitochondrial ribosomes consist of a small (37S) and a large (54S) subunit. The 37S small subunit contains a 15S ribosomal RNA (15S mt-rRNA) and 34 different proteins. The 54S large subunit contains a 21S rRNA (21S mt-rRNA) and 46 different proteins.

The protein resides in the mitochondrion. Component of the mitochondrial ribosome (mitoribosome), a dedicated translation machinery responsible for the synthesis of mitochondrial genome-encoded proteins, including at least some of the essential transmembrane subunits of the mitochondrial respiratory chain. The mitoribosomes are attached to the mitochondrial inner membrane and translation products are cotranslationally integrated into the membrane. This is Large ribosomal subunit protein uL13m (MRPL23) from Saccharomyces cerevisiae (strain ATCC 204508 / S288c) (Baker's yeast).